The chain runs to 336 residues: tRNA N6-adenosine threonylcarbamoyltransferase (336 aa).

Residues His-114 and His-118 each coordinate Fe cation. Substrate is bound by residues 136–140 (LVSGG), Asp-169, Gly-182, Asp-186, and Asn-275. Asp-301 contributes to the Fe cation binding site.

The protein belongs to the KAE1 / TsaD family. Fe(2+) serves as cofactor.

The protein resides in the cytoplasm. It carries out the reaction L-threonylcarbamoyladenylate + adenosine(37) in tRNA = N(6)-L-threonylcarbamoyladenosine(37) in tRNA + AMP + H(+). Functionally, required for the formation of a threonylcarbamoyl group on adenosine at position 37 (t(6)A37) in tRNAs that read codons beginning with adenine. Is involved in the transfer of the threonylcarbamoyl moiety of threonylcarbamoyl-AMP (TC-AMP) to the N6 group of A37, together with TsaE and TsaB. TsaD likely plays a direct catalytic role in this reaction. This is tRNA N6-adenosine threonylcarbamoyltransferase from Streptococcus pneumoniae (strain Taiwan19F-14).